We begin with the raw amino-acid sequence, 372 residues long: Phospho-2-dehydro-3-deoxyheptonate aldolase, tyrosine-inhibited (372 aa).

This sequence belongs to the class-I DAHP synthase family.

The protein localises to the cytoplasm. The protein resides in the nucleus. It catalyses the reaction D-erythrose 4-phosphate + phosphoenolpyruvate + H2O = 7-phospho-2-dehydro-3-deoxy-D-arabino-heptonate + phosphate. It functions in the pathway metabolic intermediate biosynthesis; chorismate biosynthesis; chorismate from D-erythrose 4-phosphate and phosphoenolpyruvate: step 1/7. Functionally, stereospecific condensation of phosphoenolpyruvate (PEP) and D-erythrose-4-phosphate (E4P) giving rise to 3-deoxy-D-arabino-heptulosonate-7-phosphate (DAHP). This chain is Phospho-2-dehydro-3-deoxyheptonate aldolase, tyrosine-inhibited (aro4), found in Schizosaccharomyces pombe (strain 972 / ATCC 24843) (Fission yeast).